A 521-amino-acid polypeptide reads, in one-letter code: Glutamyl-tRNA(Gln) amidotransferase subunit B, mitochondrial (521 aa).

The N-terminal 22 residues, methionine 1–phenylalanine 22, are a transit peptide targeting the mitochondrion.

It belongs to the GatB/GatE family. GatB subfamily. Subunit of the heterotrimeric GatCAB amidotransferase (AdT) complex, composed of A, B and C subunits.

It localises to the mitochondrion. It carries out the reaction L-glutamyl-tRNA(Gln) + L-glutamine + ATP + H2O = L-glutaminyl-tRNA(Gln) + L-glutamate + ADP + phosphate + H(+). In terms of biological role, allows the formation of correctly charged Gln-tRNA(Gln) through the transamidation of misacylated Glu-tRNA(Gln) in the mitochondria. The reaction takes place in the presence of glutamine and ATP through an activated gamma-phospho-Glu-tRNA(Gln). This chain is Glutamyl-tRNA(Gln) amidotransferase subunit B, mitochondrial, found in Cryptococcus neoformans var. neoformans serotype D (strain JEC21 / ATCC MYA-565) (Filobasidiella neoformans).